The sequence spans 112 residues: Large ribosomal subunit protein uL22 (112 aa).

The protein belongs to the universal ribosomal protein uL22 family. In terms of assembly, part of the 50S ribosomal subunit.

Its function is as follows. This protein binds specifically to 23S rRNA; its binding is stimulated by other ribosomal proteins, e.g. L4, L17, and L20. It is important during the early stages of 50S assembly. It makes multiple contacts with different domains of the 23S rRNA in the assembled 50S subunit and ribosome. Functionally, the globular domain of the protein is located near the polypeptide exit tunnel on the outside of the subunit, while an extended beta-hairpin is found that lines the wall of the exit tunnel in the center of the 70S ribosome. The sequence is that of Large ribosomal subunit protein uL22 from Caldanaerobacter subterraneus subsp. tengcongensis (strain DSM 15242 / JCM 11007 / NBRC 100824 / MB4) (Thermoanaerobacter tengcongensis).